Reading from the N-terminus, the 173-residue chain is uncharacterized protein (173 aa).

One can recognise an N-acetyltransferase domain in the interval 2–171 (VTVREAKLED…PDLSALKTLL (170 aa)).

It belongs to the acetyltransferase family.

This is an uncharacterized protein from Bacillus subtilis (strain 168).